A 142-amino-acid chain; its full sequence is Large ribosomal subunit protein uL11 (142 aa).

The protein belongs to the universal ribosomal protein uL11 family. In terms of assembly, part of the ribosomal stalk of the 50S ribosomal subunit. Interacts with L10 and the large rRNA to form the base of the stalk. L10 forms an elongated spine to which L12 dimers bind in a sequential fashion forming a multimeric L10(L12)X complex. One or more lysine residues are methylated.

Forms part of the ribosomal stalk which helps the ribosome interact with GTP-bound translation factors. The polypeptide is Large ribosomal subunit protein uL11 (Haemophilus influenzae (strain PittGG)).